We begin with the raw amino-acid sequence, 275 residues long: tRNA pseudouridine synthase B (275 aa).

The Nucleophile role is filled by D38.

It belongs to the pseudouridine synthase TruB family. Type 1 subfamily.

The enzyme catalyses uridine(55) in tRNA = pseudouridine(55) in tRNA. In terms of biological role, responsible for synthesis of pseudouridine from uracil-55 in the psi GC loop of transfer RNAs. This Nitratiruptor sp. (strain SB155-2) protein is tRNA pseudouridine synthase B.